Reading from the N-terminus, the 195-residue chain is Probable cobalt-precorrin-6B C(15)-methyltransferase (decarboxylating) (195 aa).

S-adenosyl-L-methionine-binding positions include Thr-24, 48 to 52 (GCGTG), Asp-72, and Ala-101.

Belongs to the methyltransferase superfamily. Archaeal-type CbiT family.

It carries out the reaction Co-precorrin-6B + S-adenosyl-L-methionine = Co-precorrin-7 + S-adenosyl-L-homocysteine + CO2. It participates in cofactor biosynthesis; adenosylcobalamin biosynthesis; cob(II)yrinate a,c-diamide from sirohydrochlorin (anaerobic route): step 8/10. In terms of biological role, catalyzes the methylation of C-15 in cobalt-precorrin-6B followed by the decarboxylation of C-12 to form cobalt-precorrin-7. The chain is Probable cobalt-precorrin-6B C(15)-methyltransferase (decarboxylating) from Pyrobaculum calidifontis (strain DSM 21063 / JCM 11548 / VA1).